The following is a 452-amino-acid chain: MASPASITLAEVARHSSPNDLWIVIEGNVYDVAEYREDHPGGDEILRQFAGKDATTEFQDAGHSNDAYVKLKTLLVGSLQSKTLPENQPEESSRIVSIAVSDRGKIPTKRQARNGNDTSKYGQLPSLVLAGGLALLFFTLKQHPWQSIQGYLSQAQVSRVQSSGWVGFLGGFLTATTLNTAAATFVGLTAKKTLLLRHRELEEYPRVKQHYLPLPPKKPGISGENTQQFLTLVDRQCIAPNVYKVRLQGDGLVIGLGQHLKVLAEIDGRKIQRSYTPVSPVGNSPKVDLIIKVYPKGQLGNYLLNLPLQSRVEIRGPFGRYSPSPTWKHIACIAGGTGIAPIYQVMRAWPGEITLLYGNETWEDILLREELEQLVLQSPRRIKVHHVLGQPKSDWKGLRGWITREMIQDLLPEPSSSTGFLVCGPDGMVRAIRGHFEAIDANGEEKANVFVF.

The 77-residue stretch at 4 to 80 (PASITLAEVA…LKTLLVGSLQ (77 aa)) folds into the Cytochrome b5 heme-binding domain. Residue 33-38 (AEYRED) coordinates FMN. 2 residues coordinate heme: His-39 and His-63. FMN-binding positions include 80–83 (QSKT) and 116–125 (NDTSKYGQLP). 2 helical membrane passes run 120-140 (KYGQLPSLVLAGGLALLFFTL) and 166-186 (VGFLGGFLTATTLNTAAATFV). Positions 225–324 (NTQQFLTLVD…RGPFGRYSPS (100 aa)) constitute an FAD-binding FR-type domain. 302–305 (YLLN) contributes to the FAD binding site. NADP(+)-binding positions include 389–390 (GQ) and 395–399 (WKGLR).

It belongs to the flavoprotein pyridine nucleotide cytochrome reductase family. FAD is required as a cofactor. Requires FMN as cofactor.

It is found in the membrane. It participates in polyketide biosynthesis. In terms of biological role, NADH-cytochrome b5 reductase-like protein; part of the gene cluster that mediates the biosynthesis of asperlin, a polyketide showing anti-inflammatory, antitumor and antibiotic activities. The first step of the asperlin biosynthesis is the production of the intermediate 2,4,6-octatrienoic acid by the highly redusing polyketide synthase alnA with cleavage of the PKS product by the esterase alnB. 2,4,6-octatrienoic acid is further converted to asperlin via several steps involving the remaining enzymes from the cluster. The chain is NADH-cytochrome b5 reductase-like protein alnC from Emericella nidulans (strain FGSC A4 / ATCC 38163 / CBS 112.46 / NRRL 194 / M139) (Aspergillus nidulans).